The primary structure comprises 256 residues: Probable enoyl-CoA hydratase echA14 (256 aa).

Residues 235–256 (GPQAKSVQSPEFAARLAAAQHR) are disordered.

Belongs to the enoyl-CoA hydratase/isomerase family.

It carries out the reaction a (3S)-3-hydroxyacyl-CoA = a (2E)-enoyl-CoA + H2O. The enzyme catalyses a 4-saturated-(3S)-3-hydroxyacyl-CoA = a (3E)-enoyl-CoA + H2O. Its function is as follows. Could possibly oxidize fatty acids using specific components. This Mycobacterium tuberculosis (strain CDC 1551 / Oshkosh) protein is Probable enoyl-CoA hydratase echA14 (echA14).